Here is a 105-residue protein sequence, read N- to C-terminus: Integration host factor subunit alpha (105 aa).

The protein belongs to the bacterial histone-like protein family. In terms of assembly, heterodimer of an alpha and a beta chain.

Its function is as follows. This protein is one of the two subunits of integration host factor, a specific DNA-binding protein that functions in genetic recombination as well as in transcriptional and translational control. This Azorhizobium caulinodans (strain ATCC 43989 / DSM 5975 / JCM 20966 / LMG 6465 / NBRC 14845 / NCIMB 13405 / ORS 571) protein is Integration host factor subunit alpha.